A 347-amino-acid chain; its full sequence is NADH-ubiquinone oxidoreductase chain 2 (347 aa).

10 consecutive transmembrane segments (helical) span residues 3–23, 25–45, 59–79, 89–109, 149–169, 178–198, 200–220, 237–257, 274–294, and 325–345; these read PIIY…VMIS, HWLL…PVLM, YFLT…INLL, MFNP…LGLS, INPN…GWGG, IMAY…PYNT, MTIL…MLLI, MPVI…LPPL, ESII…YFYM, and LLPT…ALSS.

This sequence belongs to the complex I subunit 2 family. As to quaternary structure, core subunit of respiratory chain NADH dehydrogenase (Complex I) which is composed of 45 different subunits. Interacts with TMEM242.

It localises to the mitochondrion inner membrane. The enzyme catalyses a ubiquinone + NADH + 5 H(+)(in) = a ubiquinol + NAD(+) + 4 H(+)(out). Its function is as follows. Core subunit of the mitochondrial membrane respiratory chain NADH dehydrogenase (Complex I) which catalyzes electron transfer from NADH through the respiratory chain, using ubiquinone as an electron acceptor. Essential for the catalytic activity and assembly of complex I. The protein is NADH-ubiquinone oxidoreductase chain 2 of Sus scrofa (Pig).